A 606-amino-acid polypeptide reads, in one-letter code: Elongation factor 4 (606 aa).

The 183-residue stretch at 10 to 192 folds into the tr-type G domain; sequence KNIRNFSIIA…ALVARVPPPQ (183 aa). GTP is bound by residues 22–27 and 139–142; these read DHGKST and NKID.

This sequence belongs to the TRAFAC class translation factor GTPase superfamily. Classic translation factor GTPase family. LepA subfamily.

It localises to the cell inner membrane. The catalysed reaction is GTP + H2O = GDP + phosphate + H(+). Functionally, required for accurate and efficient protein synthesis under certain stress conditions. May act as a fidelity factor of the translation reaction, by catalyzing a one-codon backward translocation of tRNAs on improperly translocated ribosomes. Back-translocation proceeds from a post-translocation (POST) complex to a pre-translocation (PRE) complex, thus giving elongation factor G a second chance to translocate the tRNAs correctly. Binds to ribosomes in a GTP-dependent manner. The chain is Elongation factor 4 from Nitrosococcus oceani (strain ATCC 19707 / BCRC 17464 / JCM 30415 / NCIMB 11848 / C-107).